The following is a 378-amino-acid chain: Ferrochelatase (378 aa).

Fe cation is bound by residues histidine 214 and glutamate 295.

Belongs to the ferrochelatase family.

The protein localises to the cytoplasm. The enzyme catalyses heme b + 2 H(+) = protoporphyrin IX + Fe(2+). The protein operates within porphyrin-containing compound metabolism; protoheme biosynthesis; protoheme from protoporphyrin-IX: step 1/1. Its function is as follows. Catalyzes the ferrous insertion into protoporphyrin IX. The sequence is that of Ferrochelatase from Hydrogenovibrio crunogenus (strain DSM 25203 / XCL-2) (Thiomicrospira crunogena).